Reading from the N-terminus, the 518-residue chain is Probable carboxypeptidase 2 (518 aa).

A signal peptide spans 1–21 (MVAYHLLTLISLGLGSHCASA). N46 is a glycosylation site (N-linked (GlcNAc...) asparagine). Residues 53-76 (PAFTSPGTVPRGFSDGTSGPTRDE) are disordered. A Peptidase M14 domain is found at 71–351 (GPTRDETMEG…VMAKSILQTA (281 aa)). N116 is a glycosylation site (N-linked (GlcNAc...) asparagine). Zn(2+)-binding residues include H136, E139, and H224. Catalysis depends on E322, which acts as the Proton donor/acceptor. N393 and N459 each carry an N-linked (GlcNAc...) asparagine glycan.

This sequence belongs to the peptidase M14 family. Zn(2+) is required as a cofactor.

It localises to the secreted. In terms of biological role, extracellular metalloprotease that contributes to pathogenicity. This chain is Probable carboxypeptidase 2 (MCPB), found in Trichophyton verrucosum (strain HKI 0517).